The following is a 358-amino-acid chain: 3-isopropylmalate dehydrogenase (358 aa).

77–90 (GPKWTNLPPDQQPE) is an NAD(+) binding site. Residues arginine 98, arginine 108, arginine 137, and aspartate 226 each coordinate substrate. Mg(2+)-binding residues include aspartate 226, aspartate 250, and aspartate 254. 284 to 296 (GSAPDIAGKGIAN) contacts NAD(+).

The protein belongs to the isocitrate and isopropylmalate dehydrogenases family. LeuB type 1 subfamily. In terms of assembly, homodimer. It depends on Mg(2+) as a cofactor. Mn(2+) is required as a cofactor.

The protein resides in the cytoplasm. The enzyme catalyses (2R,3S)-3-isopropylmalate + NAD(+) = 4-methyl-2-oxopentanoate + CO2 + NADH. It participates in amino-acid biosynthesis; L-leucine biosynthesis; L-leucine from 3-methyl-2-oxobutanoate: step 3/4. In terms of biological role, catalyzes the oxidation of 3-carboxy-2-hydroxy-4-methylpentanoate (3-isopropylmalate) to 3-carboxy-4-methyl-2-oxopentanoate. The product decarboxylates to 4-methyl-2 oxopentanoate. This chain is 3-isopropylmalate dehydrogenase, found in Haemophilus influenzae (strain 86-028NP).